Here is a 170-residue protein sequence, read N- to C-terminus: Putative calmodulin-like protein 6 (170 aa).

EF-hand domains follow at residues Gln-8–Ala-43, Pro-44–Glu-79, Asp-84–Glu-119, and Met-120–Ile-155. Ca(2+) contacts are provided by Asp-21, Asn-23, Asp-25, Cys-27, Glu-32, Asp-57, Asp-59, Asn-61, Thr-63, Glu-68, Asp-97, Asp-99, Asn-101, Glu-108, Asp-133, Asn-135, Asp-137, Gln-139, and Glu-144.

The protein belongs to the calmodulin family.

Functionally, potential calcium sensor. The polypeptide is Putative calmodulin-like protein 6 (CML6) (Oryza sativa subsp. japonica (Rice)).